A 491-amino-acid polypeptide reads, in one-letter code: Glutamyl-tRNA(Gln) amidotransferase subunit A (491 aa).

Active-site charge relay system residues include K79 and S154. S178 serves as the catalytic Acyl-ester intermediate.

Belongs to the amidase family. GatA subfamily. Heterotrimer of A, B and C subunits.

The enzyme catalyses L-glutamyl-tRNA(Gln) + L-glutamine + ATP + H2O = L-glutaminyl-tRNA(Gln) + L-glutamate + ADP + phosphate + H(+). Its function is as follows. Allows the formation of correctly charged Gln-tRNA(Gln) through the transamidation of misacylated Glu-tRNA(Gln) in organisms which lack glutaminyl-tRNA synthetase. The reaction takes place in the presence of glutamine and ATP through an activated gamma-phospho-Glu-tRNA(Gln). The chain is Glutamyl-tRNA(Gln) amidotransferase subunit A from Alkaliphilus metalliredigens (strain QYMF).